We begin with the raw amino-acid sequence, 386 residues long: uncharacterized protein (386 aa).

The F-box domain maps to Lys29–Glu76.

This is an uncharacterized protein from Caenorhabditis elegans.